The primary structure comprises 341 residues: Methionine import ATP-binding protein MetN (341 aa).

The region spanning 2–237 (IELCGLKKSF…PESLARKMLY (236 aa)) is the ABC transporter domain. 34–41 (GKSGAGKS) is an ATP binding site.

It belongs to the ABC transporter superfamily. Methionine importer (TC 3.A.1.24) family. In terms of assembly, the complex is composed of two ATP-binding proteins (MetN), two transmembrane proteins (MetI) and a solute-binding protein (MetQ).

The protein localises to the cell inner membrane. It catalyses the reaction L-methionine(out) + ATP + H2O = L-methionine(in) + ADP + phosphate + H(+). The enzyme catalyses D-methionine(out) + ATP + H2O = D-methionine(in) + ADP + phosphate + H(+). Functionally, part of the ABC transporter complex MetNIQ involved in methionine import. Responsible for energy coupling to the transport system. This is Methionine import ATP-binding protein MetN from Legionella pneumophila (strain Lens).